Consider the following 149-residue polypeptide: MAEIEQSMIDEMKDGFPLFDNKGDGKIDGAQLGDVLRSFGLNPSNAEVEKIAKANEGKRLSFDDYLAIHKQVLGQGEVGSYEDFFEGLKLFDKEGTGLISGAELRHVLATLGEKLTEAQVDELMAGGGGQEDAEGNVNYDTFAKYLMLG.

EF-hand domains are found at residues Ser-7–Asn-42 and Gly-79–Lys-114.

In terms of assembly, myosin is a hexamer of 2 heavy chains and 4 light chains (two regulatory light chains and two essential light chains).

The protein is Myosin, essential light chain of Branchiostoma floridae (Florida lancelet).